Reading from the N-terminus, the 236-residue chain is Demethylmenaquinone methyltransferase (236 aa).

S-adenosyl-L-methionine is bound by residues Thr-62, Asp-80, 107 to 108 (DA), and Ser-124.

This sequence belongs to the class I-like SAM-binding methyltransferase superfamily. MenG/UbiE family.

It catalyses the reaction a 2-demethylmenaquinol + S-adenosyl-L-methionine = a menaquinol + S-adenosyl-L-homocysteine + H(+). It participates in quinol/quinone metabolism; menaquinone biosynthesis; menaquinol from 1,4-dihydroxy-2-naphthoate: step 2/2. Its function is as follows. Methyltransferase required for the conversion of demethylmenaquinol (DMKH2) to menaquinol (MKH2). The protein is Demethylmenaquinone methyltransferase of Thermobifida fusca (strain YX).